A 337-amino-acid chain; its full sequence is Transaldolase (337 aa).

The Nuclear localization signal signature appears at 1–10 (MSGSPVKRQR). Residue Lys-115 is modified to N6-acetyllysine. Lys-142 (schiff-base intermediate with substrate) is an active-site residue. Lys-219 is subject to N6-acetyllysine. Phosphoserine occurs at positions 237 and 256. N6-acetyllysine is present on residues Lys-269, Lys-286, and Lys-321.

It belongs to the transaldolase family. Type 1 subfamily. As to quaternary structure, homodimer. Interacts with KPNA1 and KPNA4.

The protein resides in the nucleus. It localises to the cytoplasm. The enzyme catalyses D-sedoheptulose 7-phosphate + D-glyceraldehyde 3-phosphate = D-erythrose 4-phosphate + beta-D-fructose 6-phosphate. The protein operates within carbohydrate degradation; pentose phosphate pathway; D-glyceraldehyde 3-phosphate and beta-D-fructose 6-phosphate from D-ribose 5-phosphate and D-xylulose 5-phosphate (non-oxidative stage): step 2/3. Its function is as follows. Catalyzes the rate-limiting step of the non-oxidative phase in the pentose phosphate pathway. Catalyzes the reversible conversion of sedheptulose-7-phosphate and D-glyceraldehyde 3-phosphate into erythrose-4-phosphate and beta-D-fructose 6-phosphate. The polypeptide is Transaldolase (TALDO1) (Cricetulus griseus (Chinese hamster)).